The chain runs to 316 residues: tRNA uridine(34) hydroxylase (316 aa).

One can recognise a Rhodanese domain in the interval 136 to 230 (ADENTVVVDK…YLEEVPREQS (95 aa)). Residue Cys190 is the Cysteine persulfide intermediate of the active site.

It belongs to the TrhO family.

It carries out the reaction uridine(34) in tRNA + AH2 + O2 = 5-hydroxyuridine(34) in tRNA + A + H2O. Catalyzes oxygen-dependent 5-hydroxyuridine (ho5U) modification at position 34 in tRNAs. This Brucella abortus (strain 2308) protein is tRNA uridine(34) hydroxylase.